A 692-amino-acid polypeptide reads, in one-letter code: Elongation factor G (692 aa).

The 276-residue stretch at 8 to 283 folds into the tr-type G domain; sequence QDLRNIGIVA…AVVDYLPSPL (276 aa). GTP is bound by residues 17-24, 81-85, and 135-138; these read AHIDAGKT, DTPGH, and NKLD.

This sequence belongs to the TRAFAC class translation factor GTPase superfamily. Classic translation factor GTPase family. EF-G/EF-2 subfamily.

Its subcellular location is the cytoplasm. Functionally, catalyzes the GTP-dependent ribosomal translocation step during translation elongation. During this step, the ribosome changes from the pre-translocational (PRE) to the post-translocational (POST) state as the newly formed A-site-bound peptidyl-tRNA and P-site-bound deacylated tRNA move to the P and E sites, respectively. Catalyzes the coordinated movement of the two tRNA molecules, the mRNA and conformational changes in the ribosome. The sequence is that of Elongation factor G from Hydrogenobaculum sp. (strain Y04AAS1).